A 512-amino-acid chain; its full sequence is Putative B3 domain-containing protein REM4 (512 aa).

The TF-B3 1 DNA-binding region spans 11-103; that stretch reads NKAFFIIDLS…VFHVSPFGRS (93 aa). A disordered region spans residues 111 to 145; the sequence is SSSTSDDDDDERTVFDDDEDDDVGDDDDNSISEDD. Residues 115–145 are compositionally biased toward acidic residues; it reads SDDDDDERTVFDDDEDDDVGDDDDNSISEDD. 2 DNA-binding regions (TF-B3) span residues 169-265 and 307-403; these read YLVA…LCPN and ILTF…CSKV. Residues 408-465 are disordered; sequence SSDGHKTADRKPRMTDQAPLAEEQTDNRVEKRAQVTEEGGPSRSTRADPGNLQQKQPC. Composition is skewed to basic and acidic residues over residues 410 to 421 and 432 to 442; these read DGHKTADRKPRM and TDNRVEKRAQV.

Its subcellular location is the nucleus. This chain is Putative B3 domain-containing protein REM4 (REM4), found in Arabidopsis thaliana (Mouse-ear cress).